The sequence spans 103 residues: ATP synthase subunit f, mitochondrial (103 aa).

A mitochondrion-targeting transit peptide spans 1 to 6; sequence MIFRRQ.

As to quaternary structure, F-type ATP synthases have 2 components, the catalytic core F(1) and the membrane-embedded component F(0), linked together by a central stalk and a peripheral stalk. The central stalk, also called rotor shaft, is often seen as part of F(1). The peripheral stalk is seen as part of F(0). F(0) contains the membrane channel next to the rotor. F-type ATP synthases form dimers but each monomer functions independently in ATP generation. The dimer consists of 17 different polypeptides: ATP1 (subunit alpha, 3 molecules per monomer, part of F(1)), ATP2 (subunit beta, 3 copies per monomer, part of F(1)), ATP3 (subunit gamma, part of the central stalk), ATP4 (subunit b, part of the peripheral stalk), ATP5/OSCP (subunit 5/OSCP, part of the peripheral stalk), ATP6 (subunit a, part of the peripheral stalk), ATP7 (subunit d, part of the peripheral stalk), ATP8 (subunit 8, part of the peripheral stalk), OLI1 (subunit c, part of the rotor, 10 molecules per monomer), ATP14 (subunit h, part of the peripheral stalk), ATP15 (subunit epsilon, part of the central stalk), ATP16 (subunit delta, part of the central stalk), ATP17 (subunit f, part of the peripheral stalk), ATP18 (subunit i/j, part of the peripheral stalk), ATP19 (subunit k, dimer-specific, at interface between monomers), ATP20 (subunit g, at interface between monomers), TIM11 (subunit e, at interface between monomers).

The protein localises to the mitochondrion inner membrane. Mitochondrial membrane ATP synthase (F(1)F(0) ATP synthase or Complex V) produces ATP from ADP in the presence of a proton gradient across the membrane which is generated by electron transport complexes of the respiratory chain. F-type ATP synthases consist of two structural domains, F(1) - containing the extramembraneous catalytic core, and F(0) - containing the membrane proton channel, linked together by a central stalk and a peripheral stalk. During catalysis, ATP synthesis in the catalytic domain of F(1) is coupled via a rotary mechanism of the central stalk subunits to proton translocation. Part of the complex F(0) domain. Minor subunit located with subunit a/ATP6 in the membrane. The polypeptide is ATP synthase subunit f, mitochondrial (Yarrowia lipolytica (strain CLIB 122 / E 150) (Yeast)).